A 602-amino-acid chain; its full sequence is Aspartate--tRNA(Asp/Asn) ligase (602 aa).

Glutamate 175 provides a ligand contact to L-aspartate. Positions 199-202 (QIFK) are aspartate. Arginine 221 provides a ligand contact to L-aspartate. ATP is bound by residues 221–223 (RDE) and glutamine 230. Histidine 458 contacts L-aspartate. Position 492 (glutamate 492) interacts with ATP. Arginine 499 is an L-aspartate binding site. 544-547 (GLDR) contributes to the ATP binding site.

It belongs to the class-II aminoacyl-tRNA synthetase family. Type 1 subfamily. Homodimer.

Its subcellular location is the cytoplasm. The catalysed reaction is tRNA(Asx) + L-aspartate + ATP = L-aspartyl-tRNA(Asx) + AMP + diphosphate. Its function is as follows. Aspartyl-tRNA synthetase with relaxed tRNA specificity since it is able to aspartylate not only its cognate tRNA(Asp) but also tRNA(Asn). Reaction proceeds in two steps: L-aspartate is first activated by ATP to form Asp-AMP and then transferred to the acceptor end of tRNA(Asp/Asn). The chain is Aspartate--tRNA(Asp/Asn) ligase from Cupriavidus necator (strain ATCC 17699 / DSM 428 / KCTC 22496 / NCIMB 10442 / H16 / Stanier 337) (Ralstonia eutropha).